Here is a 259-residue protein sequence, read N- to C-terminus: Proteasome subunit alpha (259 aa).

Belongs to the peptidase T1A family. The 20S proteasome core is composed of 14 alpha and 14 beta subunits that assemble into four stacked heptameric rings, resulting in a barrel-shaped structure. The two inner rings, each composed of seven catalytic beta subunits, are sandwiched by two outer rings, each composed of seven alpha subunits. The catalytic chamber with the active sites is on the inside of the barrel. Has a gated structure, the ends of the cylinder being occluded by the N-termini of the alpha-subunits. Is capped at one or both ends by the proteasome regulatory ATPase, PAN.

The protein localises to the cytoplasm. Its activity is regulated as follows. The formation of the proteasomal ATPase PAN-20S proteasome complex, via the docking of the C-termini of PAN into the intersubunit pockets in the alpha-rings, triggers opening of the gate for substrate entry. Interconversion between the open-gate and close-gate conformations leads to a dynamic regulation of the 20S proteasome proteolysis activity. Component of the proteasome core, a large protease complex with broad specificity involved in protein degradation. This Methanococcus vannielii (strain ATCC 35089 / DSM 1224 / JCM 13029 / OCM 148 / SB) protein is Proteasome subunit alpha.